A 146-amino-acid chain; its full sequence is MGRVRTKTVKKSAKVIIERYYPKLTLDFETNKRICDEIAIIASKRLRNKIAGYTTHLMKRIQRGPVRGISFKLQEEERERKDQYVPEVSALDFTQNSESGQLDVDTETKDLLKHLGFDSIPVNVIPVTQAQPVERGRRFGDRPRRD.

This sequence belongs to the eukaryotic ribosomal protein eS17 family. Component of the small ribosomal subunit (SSU). Mature N.crassa ribosomes consist of a small (40S) and a large (60S) subunit. The 40S small subunit contains 1 molecule of ribosomal RNA (18S rRNA) and at least 32 different proteins. The large 60S subunit contains 3 rRNA molecules (26S, 5.8S and 5S rRNA) and at least 42 different proteins.

The protein resides in the cytoplasm. Its function is as follows. Component of the ribosome, a large ribonucleoprotein complex responsible for the synthesis of proteins in the cell. The small ribosomal subunit (SSU) binds messenger RNAs (mRNAs) and translates the encoded message by selecting cognate aminoacyl-transfer RNA (tRNA) molecules. The large subunit (LSU) contains the ribosomal catalytic site termed the peptidyl transferase center (PTC), which catalyzes the formation of peptide bonds, thereby polymerizing the amino acids delivered by tRNAs into a polypeptide chain. The nascent polypeptides leave the ribosome through a tunnel in the LSU and interact with protein factors that function in enzymatic processing, targeting, and the membrane insertion of nascent chains at the exit of the ribosomal tunnel. This is Small ribosomal subunit protein eS17 (rps-17) from Neurospora crassa (strain ATCC 24698 / 74-OR23-1A / CBS 708.71 / DSM 1257 / FGSC 987).